The chain runs to 287 residues: tRNA-cytidine(32) 2-sulfurtransferase (287 aa).

The PP-loop motif motif lies at 58–63; it reads SGGKDS. 3 residues coordinate [4Fe-4S] cluster: Cys-133, Cys-136, and Cys-224.

It belongs to the TtcA family. As to quaternary structure, homodimer. The cofactor is Mg(2+). Requires [4Fe-4S] cluster as cofactor.

The protein localises to the cytoplasm. It carries out the reaction cytidine(32) in tRNA + S-sulfanyl-L-cysteinyl-[cysteine desulfurase] + AH2 + ATP = 2-thiocytidine(32) in tRNA + L-cysteinyl-[cysteine desulfurase] + A + AMP + diphosphate + H(+). It functions in the pathway tRNA modification. Its function is as follows. Catalyzes the ATP-dependent 2-thiolation of cytidine in position 32 of tRNA, to form 2-thiocytidine (s(2)C32). The sulfur atoms are provided by the cysteine/cysteine desulfurase (IscS) system. The sequence is that of tRNA-cytidine(32) 2-sulfurtransferase from Dinoroseobacter shibae (strain DSM 16493 / NCIMB 14021 / DFL 12).